Here is a 1157-residue protein sequence, read N- to C-terminus: ATP-dependent helicase/deoxyribonuclease subunit B (1157 aa).

Residues 1-277 enclose the UvrD-like helicase ATP-binding domain; sequence MTLQIIAGKA…KILLENKRAN (277 aa). Residue 8–15 coordinates ATP; that stretch reads GKAGTGKT. Residues 271–590 enclose the UvrD-like helicase C-terminal domain; sequence LENKRANSDS…VLADMENAKL (320 aa). [4Fe-4S] cluster-binding residues include cysteine 794, cysteine 1115, cysteine 1118, and cysteine 1124.

The protein belongs to the helicase family. AddB/RexB type 1 subfamily. Heterodimer of AddA and AddB. Mg(2+) serves as cofactor. It depends on [4Fe-4S] cluster as a cofactor.

Its function is as follows. The heterodimer acts as both an ATP-dependent DNA helicase and an ATP-dependent, dual-direction single-stranded exonuclease. Recognizes the chi site generating a DNA molecule suitable for the initiation of homologous recombination. The AddB subunit has 5' -&gt; 3' nuclease activity but not helicase activity. The chain is ATP-dependent helicase/deoxyribonuclease subunit B from Listeria innocua serovar 6a (strain ATCC BAA-680 / CLIP 11262).